Consider the following 387-residue polypeptide: MDVLLGTEELEDELHQLHFNYTCVPSLGLSVARDAETAVNFLIVLVGGPMNFLVLATQMLSNRSYSVSTPTLYMTNLYLANLLTVATLPFLMLSNRGLVGSSPEGCKIAALAYYATCTAGFATLMLIAINRYRVIHQRTRSGAGSKRQTYAVLAVTWLASLMCASPAPLYATVMAHDSADALAFETCIIYFSYDQVKTVLATFKILITMIWGITPVVMMSWFYVFFYRRLKLTSYRRRSQTLTFVTTLMLSFLVVQTPFVAIMSYDSYGVLNWPINCDTINKRDAVSMLARVVPNFHCLLNPVLYAFLGRDFNKRFILCISGKLFSRRRALRERAGLGAQIVGPVCALPSKTVTLSEETRDLSQEIRRLRALGRPPPPPPPPPPPNC.

At 1–33 (MDVLLGTEELEDELHQLHFNYTCVPSLGLSVAR) the chain is on the extracellular side. Residue Asn20 is glycosylated (N-linked (GlcNAc...) asparagine; by host). A helical transmembrane segment spans residues 34 to 61 (DAETAVNFLIVLVGGPMNFLVLATQMLS). Residues 62–71 (NRSYSVSTPT) lie on the Cytoplasmic side of the membrane. The helical transmembrane segment at 72–94 (LYMTNLYLANLLTVATLPFLMLS) threads the bilayer. Over 95 to 107 (NRGLVGSSPEGCK) the chain is Extracellular. The chain crosses the membrane as a helical span at residues 108–129 (IAALAYYATCTAGFATLMLIAI). At 130 to 150 (NRYRVIHQRTRSGAGSKRQTY) the chain is on the cytoplasmic side. The chain crosses the membrane as a helical span at residues 151-169 (AVLAVTWLASLMCASPAPL). Residues 170–204 (YATVMAHDSADALAFETCIIYFSYDQVKTVLATFK) lie on the Extracellular side of the membrane. Residues 205–224 (ILITMIWGITPVVMMSWFYV) form a helical membrane-spanning segment. The Cytoplasmic segment spans residues 225–244 (FFYRRLKLTSYRRRSQTLTF). A helical transmembrane segment spans residues 245–268 (VTTLMLSFLVVQTPFVAIMSYDSY). At 269-285 (GVLNWPINCDTINKRDA) the chain is on the extracellular side. The helical transmembrane segment at 286–309 (VSMLARVVPNFHCLLNPVLYAFLG) threads the bilayer. The Cytoplasmic portion of the chain corresponds to 310–387 (RDFNKRFILC…PPPPPPPPNC (78 aa)). The segment at 368–387 (RLRALGRPPPPPPPPPPPNC) is disordered. Residues 374 to 387 (RPPPPPPPPPPPNC) are compositionally biased toward pro residues.

Belongs to the G-protein coupled receptor 1 family.

The protein resides in the host cell membrane. Its function is as follows. Plays an important role in vivo, in particular in the dissemination to or replication in the salivary gland. The protein is G-protein coupled receptor homolog R33 of Rattus.